A 1848-amino-acid chain; its full sequence is Chitin synthase E (1848 aa).

The span at 1–17 (MAAPSPAGGAPSHAQSS) shows a compositional bias: low complexity. Residues 1-22 (MAAPSPAGGAPSHAQSSLPSLP) are disordered. In terms of domain architecture, Myosin motor spans 1–779 (MAAPSPAGGA…CWADLAKVGE (779 aa)). An ATP-binding site is contributed by 102–109 (GESGSGKT). The disordered stretch occupies residues 593 to 621 (SSKPLRMPSMARRKTSPSSRLAFDAGDAD). The interval 659-683 (LDIVNKCLSSTNLNPYFIFCLKPND) is actin-binding. 2 helical membrane-spanning segments follow: residues 889–909 (WIAL…KLFG) and 928–948 (LIIW…PGLV). Residues 952 to 1040 (QHVYSAAELS…LLDYRPTNIS (89 aa)) form the Cytochrome b5 heme-binding domain. N-linked (GlcNAc...) asparagine glycosylation is found at Asn1038 and Asn1063. Residues 1200–1220 (FILAISVLICSIIVFKFLAAL) traverse the membrane as a helical segment. Residues Asn1423, Asn1457, and Asn1563 are each glycosylated (N-linked (GlcNAc...) asparagine). The next 3 helical transmembrane spans lie at 1595–1615 (LSTV…YWLV), 1621–1641 (IPYT…LIFI), and 1648–1668 (MVGW…ALPL). N-linked (GlcNAc...) asparagine glycosylation occurs at Asn1786. Residues 1790–1845 (LPSDDAILAEIREILRTADLMSVTKKSIKLELERRFGVNLDLKRPYINSATEAVLA) form the DEK-C domain.

It in the N-terminal section; belongs to the TRAFAC class myosin-kinesin ATPase superfamily. Myosin family. The protein in the C-terminal section; belongs to the chitin synthase family. Class V subfamily.

The protein resides in the cell membrane. The protein localises to the cell septum. Its subcellular location is the cell tip. The enzyme catalyses [(1-&gt;4)-N-acetyl-beta-D-glucosaminyl](n) + UDP-N-acetyl-alpha-D-glucosamine = [(1-&gt;4)-N-acetyl-beta-D-glucosaminyl](n+1) + UDP + H(+). In terms of biological role, polymerizes chitin, a structural polymer of the cell wall and septum, by transferring the sugar moiety of UDP-GlcNAc to the non-reducing end of the growing chitin polymer. Important for hyphal growth and conidiophore development but not pathogenicity. This is Chitin synthase E from Aspergillus fumigatus (strain ATCC MYA-4609 / CBS 101355 / FGSC A1100 / Af293) (Neosartorya fumigata).